Reading from the N-terminus, the 1784-residue chain is Protein mel-28 (1784 aa).

The interval 1 to 956 is required for nuclear envelope and kinetochore localization; that stretch reads MDNENSSIFK…QNDDEDMPEV (956 aa). Positions 566–778 are required for association with mitotic chromosomes; sequence GKIEEFCQLA…TSPEDSEHSE (213 aa). An important for nuclear localization region spans residues 846-1071; it reads APMTVTIGKH…HNSILKTAKG (226 aa). 2 disordered regions span residues 945–994 and 1115–1784; these read KVQN…AKRI and ETMT…RAKQ. Basic and acidic residues predominate over residues 1126–1149; the sequence is GKHDEEKDSEKNVVDEMEEVKDQE. 2 stretches are compositionally biased toward acidic residues: residues 1222–1232 and 1266–1278; these read LEEEGEDEDIW and VNEE…EEVQ. Positions 1239–1601 are chromatin binding; it reads FEVQMDEDCE…TTVDPSSSAL (363 aa). A compositionally biased stretch (basic and acidic residues) spans 1279–1293; it reads QDAKEPEKTEKRQEE. Over residues 1297-1306 the composition is skewed to low complexity; the sequence is EVMQPVIPEE. The span at 1321–1336 shows a compositional bias: acidic residues; the sequence is ELQEEPDIVPTGDEDT. Basic and acidic residues predominate over residues 1337-1351; that stretch reads ADKVQEQAVEEDRPP. Residues 1352–1366 are compositionally biased toward polar residues; the sequence is SRNTRSSSVQKSTSQ. Residues 1367–1382 show a composition bias toward basic and acidic residues; sequence VEDRDPKELVEEERPP. A compositionally biased stretch (polar residues) spans 1383 to 1398; the sequence is SRNTRSASVQKSSNQE. Over residues 1428–1444 the composition is skewed to basic and acidic residues; that stretch reads KVKDQKPEELIEEDRPP. Positions 1445-1459 are enriched in polar residues; sequence SRNTRSASAQKTVAA. Positions 1533–1546 are enriched in low complexity; it reads AAASTSSSRAGSVT. Residues 1566–1576 show a composition bias toward acidic residues; it reads VQEEEEEEAEE. Residues 1581-1606 show a composition bias toward polar residues; that stretch reads SRSTRSASVKNTTVDPSSSALASTKR. Residues 1601–1784 are important for nuclear localization; it reads LASTKRTTSR…LLRSARRAKQ (184 aa). Positions 1630–1642 form a DNA-binding region, a.T hook 1; it reads TPKRGRPAKKDAG. The required for chromosome segregation, nuclear growth, nucleoplasmic accumulation and cell cycle timing, but not required for nuclear envelope and kinetochore localization stretch occupies residues 1630–1784; it reads TPKRGRPAKK…LLRSARRAKQ (155 aa). Residues 1716 to 1735 show a composition bias toward polar residues; sequence AGTSKQSRSVTRSRASSIDV. The segment at residues 1746–1758 is a DNA-binding region (a.T hook 2); that stretch reads KRGRGRPPKTVLE.

In terms of tissue distribution, ubiquitously expressed (at protein level).

It is found in the nucleus. Its subcellular location is the nucleoplasm. The protein resides in the nucleus envelope. The protein localises to the nucleus inner membrane. It localises to the nuclear pore complex. It is found in the chromosome. Its subcellular location is the centromere. The protein resides in the kinetochore. Its function is as follows. Nuclear envelope protein which has essential roles in assembly of nuclear pore complexes and in chromatin maintenance during the cell cycle. Appears to be a stable structural component of the nuclear envelope during interphase. In dividing cells, localizes to kinetochores during early stages of mitosis and then to chromatin during late mitosis. Important for several mitotic processes including chromosome condensation, kinetochore assembly, chromosome segregation and cell-cycle timing. In postmitotic cells, plays a role in the early steps of nuclear pore complex assembly by recruiting the nucleoporins npp-10 and npp-5 to chromatin. Also involved in meiotic chromosome segregation. May function downstream of the Ran GTPase signaling pathway. This Caenorhabditis elegans protein is Protein mel-28.